Consider the following 352-residue polypeptide: MESLRGQEQIWQLMFSFVDSMALKCAIELRIADIIHSHGKPITLSQIASGIRSNSNSSISPNIPYLSRIMRFLVRKNIFTEHQEDNDEVISLYGLSDSSRWLLRDFKSSLAPMVLMQTHPLSMAVWHFLEDYVRNSSNTFEKAHGCNIWEFSSANPDFNKIFNNAMASIVPIYMGAVLSSYKDGLGCIKGTVVDVGGGTGGSISELMKYYPNIKGINFDLPHVIATAPALDGVTHISGDIFESIPSADAVLMKGVLHCFSDEKCVKVLRNCRKAITDKKNGKIIILEIVLDPTSNQIFDETRMVYDLLIPLFSGGKERTELEWKRLLNEAGFTSIKITKIPIIPAIIEAFLV.

Residue Asp-219 participates in S-adenosyl-L-methionine binding. The Proton acceptor role is filled by His-257.

The protein belongs to the class I-like SAM-binding methyltransferase superfamily. Cation-independent O-methyltransferase family. Homodimer. In terms of tissue distribution, highly expressed in lupulin glands. Detected in early-, mid- and late-stage cones.

It is found in the cytoplasm. The catalysed reaction is desmethylxanthohumol + S-adenosyl-L-methionine = xanthohumol + S-adenosyl-L-homocysteine + H(+). It carries out the reaction xanthogalenol + S-adenosyl-L-methionine = 4'-O-methylxanthohumol + S-adenosyl-L-homocysteine + H(+). Its pathway is secondary metabolite biosynthesis. With respect to regulation, inhibited by S-adenosyl homocysteine. Its function is as follows. Involved in the biosynthesis of prenylated phenolics natural products which contribute to the bitter taste of beer and display broad biological activities. Catalyzes the biosynthesis of xanthohumol. Methylates desmethylxanthohumol and xanthogalenol, but not caffeic acid, prenylflavanones, simple phenols or phenylpropanoids. The chain is Desmethylxanthohumol 6'-O-methyltransferase from Humulus lupulus (European hop).